The chain runs to 263 residues: MFTLAHHRHAIRKPMAEFFGVALLVIFGAGAACQVVLSTNPNSFLSINFGWAIGIAMGAWISGSISGGHINPAITIAMATYRGFPWREVPSYILAQVLGGVVGAALVYANYIHAIDVFEGGRHIRTQATASLFATYALPYMTQVSCFFSEFLATAVLAMMVLALTDNRNGAPTNGLSPFALFVLFIGLGASLGMETAYALNPARDFGPRLFLAMAGYGKALFNYRSQYWLWAPIIAPVLGAQAGGLLYDTFLYDGDDSPIKWR.

Residues M1–E17 are Cytoplasmic-facing. A helical transmembrane segment spans residues F18–S38. At T39–F44 the chain is on the extracellular side. A helical transmembrane segment spans residues L45–I65. Topologically, residues S66–E88 are cytoplasmic. The NPA 1 signature appears at N71–A73. The chain crosses the membrane as a helical span at residues V89–A109. The Extracellular segment spans residues N110–Q143. The helical transmembrane segment at V144–L164 threads the bilayer. The Cytoplasmic portion of the chain corresponds to T165–N174. The chain crosses the membrane as a helical span at residues G175 to E195. At T196–Q227 the chain is on the extracellular side. Positions N201–A203 match the NPA 2 motif. A helical transmembrane segment spans residues Y228–Y248. Residues D249–R263 lie on the Cytoplasmic side of the membrane.

It belongs to the MIP/aquaporin (TC 1.A.8) family.

It localises to the membrane. It catalyses the reaction H2O(in) = H2O(out). In terms of biological role, probable water channel required to facilitate the transport of water across membranes. In Laccaria bicolor (strain S238N-H82 / ATCC MYA-4686) (Bicoloured deceiver), this protein is Aquaporin Lacbi1:233199.